The chain runs to 357 residues: Protein RecA (357 aa).

Residue 67-74 (GPESSGKT) coordinates ATP.

The protein belongs to the RecA family.

Its subcellular location is the cytoplasm. Functionally, can catalyze the hydrolysis of ATP in the presence of single-stranded DNA, the ATP-dependent uptake of single-stranded DNA by duplex DNA, and the ATP-dependent hybridization of homologous single-stranded DNAs. It interacts with LexA causing its activation and leading to its autocatalytic cleavage. This is Protein RecA from Shewanella oneidensis (strain ATCC 700550 / JCM 31522 / CIP 106686 / LMG 19005 / NCIMB 14063 / MR-1).